The primary structure comprises 418 residues: FK506-binding protein 3 (418 aa).

Disordered stretches follow at residues 49–133 (PSTL…DDEF), 172–273 (SLTG…ETKK), and 289–309 (LEEG…KPKT). Positions 61–89 (YDDEDDAGGLLGDYDEDELDISEEEEEEE) are enriched in acidic residues. A compositionally biased stretch (basic residues) spans 93–103 (KSKKGKGKGKS). Acidic residues-rich tracts occupy residues 108-133 (EEEE…DDEF) and 186-224 (GYDD…DASD). Over residues 225 to 239 (VEAKIQELVEKEQSK) the composition is skewed to basic and acidic residues. Residues 251-264 (PEEEEEEEEEEEEE) show a composition bias toward acidic residues. The PPIase FKBP-type domain occupies 332 to 418 (GSKVGMRYIG…TFDVKLVSLK (87 aa)).

This sequence belongs to the FKBP-type PPIase family. FKBP3/4 subfamily.

It localises to the nucleus. The protein localises to the nucleolus. The catalysed reaction is [protein]-peptidylproline (omega=180) = [protein]-peptidylproline (omega=0). Inhibited by both FK506 and rapamycin. PPIases accelerate the folding of proteins. It catalyzes the cis-trans isomerization of proline imidic peptide bonds in oligopeptides. This chain is FK506-binding protein 3 (FPR3), found in Kluyveromyces lactis (strain ATCC 8585 / CBS 2359 / DSM 70799 / NBRC 1267 / NRRL Y-1140 / WM37) (Yeast).